A 172-amino-acid polypeptide reads, in one-letter code: Peptidyl-prolyl cis-trans isomerase CYP18-4 (172 aa).

Residues 7–170 (FFDMSLSGTP…KVVTITDCGQ (164 aa)) enclose the PPIase cyclophilin-type domain.

It belongs to the cyclophilin-type PPIase family. As to quaternary structure, interacts with A.tumefaciens VirD2. In terms of tissue distribution, ubiquitous, with higher levels in roots and flowers. Confined to vascular tissues. Also detected in stigmas, base of siliques and anthers.

It is found in the cytoplasm. The catalysed reaction is [protein]-peptidylproline (omega=180) = [protein]-peptidylproline (omega=0). Binds cyclosporin A (CsA). CsA mediates some of its effects via an inhibitory action on PPIase. Functionally, PPIases accelerate the folding of proteins. It catalyzes the cis-trans isomerization of proline imidic peptide bonds in oligopeptides. This is Peptidyl-prolyl cis-trans isomerase CYP18-4 (CYP18-4) from Arabidopsis thaliana (Mouse-ear cress).